The following is a 195-amino-acid chain: Imidazoleglycerol-phosphate dehydratase (195 aa).

Belongs to the imidazoleglycerol-phosphate dehydratase family.

It is found in the cytoplasm. The enzyme catalyses D-erythro-1-(imidazol-4-yl)glycerol 3-phosphate = 3-(imidazol-4-yl)-2-oxopropyl phosphate + H2O. Its pathway is amino-acid biosynthesis; L-histidine biosynthesis; L-histidine from 5-phospho-alpha-D-ribose 1-diphosphate: step 6/9. This is Imidazoleglycerol-phosphate dehydratase from Sphingopyxis alaskensis (strain DSM 13593 / LMG 18877 / RB2256) (Sphingomonas alaskensis).